We begin with the raw amino-acid sequence, 189 residues long: UPF0301 protein RPR_01165 (189 aa).

It belongs to the UPF0301 (AlgH) family.

The polypeptide is UPF0301 protein RPR_01165 (Rickettsia peacockii (strain Rustic)).